The primary structure comprises 351 residues: Histidinol-phosphate aminotransferase (351 aa).

N6-(pyridoxal phosphate)lysine is present on Lys-213.

Belongs to the class-II pyridoxal-phosphate-dependent aminotransferase family. Histidinol-phosphate aminotransferase subfamily. In terms of assembly, homodimer. Requires pyridoxal 5'-phosphate as cofactor.

The enzyme catalyses L-histidinol phosphate + 2-oxoglutarate = 3-(imidazol-4-yl)-2-oxopropyl phosphate + L-glutamate. Its pathway is amino-acid biosynthesis; L-histidine biosynthesis; L-histidine from 5-phospho-alpha-D-ribose 1-diphosphate: step 7/9. The protein is Histidinol-phosphate aminotransferase of Clostridium kluyveri (strain NBRC 12016).